Consider the following 183-residue polypeptide: MSRLRIYTESGELIKDITDPKEIAEELQKINVLFERWRANAPLKENASDEEIINAYKHEIDRLINKYGFQSYDVIAMTPEHPKKDELRQKFLKEHTHSDFEVRYFVYGDGVFYLHPNDKVYILHCTAGDLISVPPNTKHWFDMGENPNFKCIRLFTTPEGWVAEYTGSDIAEKFPKYEEVVNG.

Residues H95, H97, E101, and H139 each coordinate Fe(2+). Ni(2+)-binding residues include H95, H97, E101, and H139.

This sequence belongs to the acireductone dioxygenase (ARD) family. In terms of assembly, monomer. Fe(2+) serves as cofactor. The cofactor is Ni(2+).

The catalysed reaction is 1,2-dihydroxy-5-(methylsulfanyl)pent-1-en-3-one + O2 = 3-(methylsulfanyl)propanoate + CO + formate + 2 H(+). The enzyme catalyses 1,2-dihydroxy-5-(methylsulfanyl)pent-1-en-3-one + O2 = 4-methylsulfanyl-2-oxobutanoate + formate + 2 H(+). It functions in the pathway amino-acid biosynthesis; L-methionine biosynthesis via salvage pathway; L-methionine from S-methyl-5-thio-alpha-D-ribose 1-phosphate: step 5/6. Functionally, catalyzes 2 different reactions between oxygen and the acireductone 1,2-dihydroxy-3-keto-5-methylthiopentene (DHK-MTPene) depending upon the metal bound in the active site. Fe-containing acireductone dioxygenase (Fe-ARD) produces formate and 2-keto-4-methylthiobutyrate (KMTB), the alpha-ketoacid precursor of methionine in the methionine recycle pathway. Ni-containing acireductone dioxygenase (Ni-ARD) produces methylthiopropionate, carbon monoxide and formate, and does not lie on the methionine recycle pathway. This chain is Acireductone dioxygenase, found in Aquifex aeolicus (strain VF5).